Reading from the N-terminus, the 307-residue chain is HTH-type transcriptional regulator DmlR (307 aa).

The 58-residue stretch at 5-62 folds into the HTH lysR-type domain; it reads PLLNDLRVFMLVARRAGFAAVAEELGVSPAFVSKRIALLEQTLNVVLLHRTTRRVTIT. A DNA-binding region (H-T-H motif) is located at residues 22–41; that stretch reads FAAVAEELGVSPAFVSKRIA.

Belongs to the LysR transcriptional regulatory family.

Functionally, transcriptional regulator required for the aerobic growth on D-malate as the sole carbon source. Induces the expression of dmlA in response to D-malate or L- or meso-tartrate. Negatively regulates its own expression. The chain is HTH-type transcriptional regulator DmlR (dmlR) from Escherichia coli (strain K12).